A 128-amino-acid chain; its full sequence is Flagellar assembly factor FliW 1 (128 aa).

This sequence belongs to the FliW family. As to quaternary structure, interacts with translational regulator CsrA and flagellin(s).

It is found in the cytoplasm. Functionally, acts as an anti-CsrA protein, binds CsrA and prevents it from repressing translation of its target genes, one of which is flagellin. Binds to flagellin and participates in the assembly of the flagellum. The polypeptide is Flagellar assembly factor FliW 1 (Wolinella succinogenes (strain ATCC 29543 / DSM 1740 / CCUG 13145 / JCM 31913 / LMG 7466 / NCTC 11488 / FDC 602W) (Vibrio succinogenes)).